The primary structure comprises 369 residues: Chorismate synthase (369 aa).

2 residues coordinate NADP(+): R48 and R54. FMN is bound by residues 125–127, 238–239, G278, 293–297, and R319; these read RSS, NA, and KPTSS.

It belongs to the chorismate synthase family. As to quaternary structure, homotetramer. Requires FMNH2 as cofactor.

The enzyme catalyses 5-O-(1-carboxyvinyl)-3-phosphoshikimate = chorismate + phosphate. It participates in metabolic intermediate biosynthesis; chorismate biosynthesis; chorismate from D-erythrose 4-phosphate and phosphoenolpyruvate: step 7/7. Functionally, catalyzes the anti-1,4-elimination of the C-3 phosphate and the C-6 proR hydrogen from 5-enolpyruvylshikimate-3-phosphate (EPSP) to yield chorismate, which is the branch point compound that serves as the starting substrate for the three terminal pathways of aromatic amino acid biosynthesis. This reaction introduces a second double bond into the aromatic ring system. This Burkholderia mallei (strain NCTC 10229) protein is Chorismate synthase.